Here is a 238-residue protein sequence, read N- to C-terminus: B-box zinc finger protein 25 (238 aa).

8 residues coordinate Zn(2+): Cys5, Cys8, Cys28, His33, Cys57, Cys60, Cys80, and His85. The segment at 5 to 47 (CDVCEKAPATLICCADEAALCAKCDVEVHAANKLASKHQRLFL) adopts a B box-type 1; atypical zinc-finger fold. A B box-type 2; atypical zinc finger spans residues 57–99 (CDICLEKAAFIFCVEDRALLCRDCDEATHAPNTRSANHQRFLA). A disordered region spans residues 115 to 139 (VEKNHFDPSNQQSLSKPPTQQPAAP). Residues 121 to 137 (DPSNQQSLSKPPTQQPA) show a composition bias toward polar residues. The interaction with COP1 stretch occupies residues 226–238 (DDEEEHFLVPDLG).

As to quaternary structure, interacts with COP1 WD40 domain. Interacts with HY5 and HYH. Post-translationally, COP1-mediated ubiquitination and subsequent proteasomal degradation of BBX25/STH occurs in the dark.

The protein localises to the nucleus. Its function is as follows. Acts as a negative regulator of seedling photomorphogenesis. BBX25/STH and BBX24/STO function as transcriptional corepressors of HY5 activity, leading to the down-regulation of BBX22 expression. BBX25/STH acts additively with BBX24/STO during de-etiolation and the hypocotyl shade avoidance response. The protein is B-box zinc finger protein 25 of Arabidopsis thaliana (Mouse-ear cress).